Here is a 223-residue protein sequence, read N- to C-terminus: Probable transaldolase (223 aa).

The active-site Schiff-base intermediate with substrate is the lysine 83.

Belongs to the transaldolase family. Type 3B subfamily.

Its subcellular location is the cytoplasm. It carries out the reaction D-sedoheptulose 7-phosphate + D-glyceraldehyde 3-phosphate = D-erythrose 4-phosphate + beta-D-fructose 6-phosphate. It participates in carbohydrate degradation; pentose phosphate pathway; D-glyceraldehyde 3-phosphate and beta-D-fructose 6-phosphate from D-ribose 5-phosphate and D-xylulose 5-phosphate (non-oxidative stage): step 2/3. Transaldolase is important for the balance of metabolites in the pentose-phosphate pathway. The polypeptide is Probable transaldolase (Myxococcus xanthus (strain DK1622)).